A 498-amino-acid chain; its full sequence is Cytochrome P450 71B5 (498 aa).

A helical membrane pass occupies residues 3–23; the sequence is IFLCFLLLLPLSLIFLKKLLP. Cys439 contacts heme.

Belongs to the cytochrome P450 family. It depends on heme as a cofactor.

It is found in the membrane. In Arabidopsis thaliana (Mouse-ear cress), this protein is Cytochrome P450 71B5 (CYP71B5).